We begin with the raw amino-acid sequence, 111 residues long: T cell receptor beta variable 29-1 (111 aa).

Residues 1–16 form the signal peptide; that stretch reads MLSLLLLLLGLGSVFS. The region spanning 17 to 111 is the Ig-like domain; it reads AVISQKPSRD…DSSIYLCSVE (95 aa). A disulfide bond links C38 and C108. The N-linked (GlcNAc...) asparagine glycan is linked to N87.

As to quaternary structure, alpha-beta TR is a heterodimer composed of an alpha and beta chain; disulfide-linked. The alpha-beta TR is associated with the transmembrane signaling CD3 coreceptor proteins to form the TR-CD3 (TcR or TCR). The assembly of alpha-beta TR heterodimers with CD3 occurs in the endoplasmic reticulum where a single alpha-beta TR heterodimer associates with one CD3D-CD3E heterodimer, one CD3G-CD3E heterodimer and one CD247 homodimer forming a stable octameric structure. CD3D-CD3E and CD3G-CD3E heterodimers preferentially associate with TR alpha and TR beta chains, respectively. The association of the CD247 homodimer is the last step of TcR assembly in the endoplasmic reticulum and is required for transport to the cell surface.

The protein resides in the cell membrane. Functionally, v region of the variable domain of T cell receptor (TR) beta chain that participates in the antigen recognition. Alpha-beta T cell receptors are antigen specific receptors which are essential to the immune response and are present on the cell surface of T lymphocytes. Recognize peptide-major histocompatibility (MH) (pMH) complexes that are displayed by antigen presenting cells (APC), a prerequisite for efficient T cell adaptive immunity against pathogens. Binding of alpha-beta TR to pMH complex initiates TR-CD3 clustering on the cell surface and intracellular activation of LCK that phosphorylates the ITAM motifs of CD3G, CD3D, CD3E and CD247 enabling the recruitment of ZAP70. In turn ZAP70 phosphorylates LAT, which recruits numerous signaling molecules to form the LAT signalosome. The LAT signalosome propagates signal branching to three major signaling pathways, the calcium, the mitogen-activated protein kinase (MAPK) kinase and the nuclear factor NF-kappa-B (NF-kB) pathways, leading to the mobilization of transcription factors that are critical for gene expression and essential for T cell growth and differentiation. The T cell repertoire is generated in the thymus, by V-(D)-J rearrangement. This repertoire is then shaped by intrathymic selection events to generate a peripheral T cell pool of self-MH restricted, non-autoaggressive T cells. Post-thymic interaction of alpha-beta TR with the pMH complexes shapes TR structural and functional avidity. The chain is T cell receptor beta variable 29-1 from Homo sapiens (Human).